The primary structure comprises 32 residues: Variegin (32 aa).

The interval 1–32 (SDQGDVAEPKMHKTAPPFDFEAIPEEYLDDES) is disordered. The tract at residues 8–14 (EPKMHKT) is contains the active site. Thr14 is a glycosylation site (O-linked (Hex) threonine). Residues 22 to 32 (AIPEEYLDDES) are compositionally biased toward acidic residues.

Interacts with human F2 (thrombin); the interaction results in thrombin inhibition.

It is found in the secreted. Its function is as follows. Thrombin inhibitor. Does not inhibit other serine proteases. This chain is Variegin, found in Amblyomma variegatum (Tropical bont tick).